Here is a 494-residue protein sequence, read N- to C-terminus: Cobyric acid synthase (494 aa).

The GATase cobBQ-type domain maps to 249–443; the sequence is EINVTILRLP…LHGIFDNGAW (195 aa). Cysteine 330 functions as the Nucleophile in the catalytic mechanism. Histidine 435 is a catalytic residue.

This sequence belongs to the CobB/CobQ family. CobQ subfamily.

It functions in the pathway cofactor biosynthesis; adenosylcobalamin biosynthesis. Catalyzes amidations at positions B, D, E, and G on adenosylcobyrinic A,C-diamide. NH(2) groups are provided by glutamine, and one molecule of ATP is hydrogenolyzed for each amidation. This is Cobyric acid synthase from Crocosphaera subtropica (strain ATCC 51142 / BH68) (Cyanothece sp. (strain ATCC 51142)).